The primary structure comprises 415 residues: S-inosyl-L-homocysteine hydrolase (415 aa).

Substrate-binding residues include Asp123 and Glu148. NAD(+) is bound at residue 149 to 151 (TTT). Substrate contacts are provided by Lys178 and Asp182. NAD(+) contacts are provided by residues Asn183, 212–217 (GYGWCG), Glu235, 291–293 (AGH), and Asn337.

It belongs to the adenosylhomocysteinase family. As to quaternary structure, exists both as a homotetramer and a homodimer, in a 4:1 ratio. Requires NAD(+) as cofactor.

The protein resides in the cytoplasm. The enzyme catalyses S-inosyl-L-homocysteine + H2O = L-homocysteine + inosine. The protein operates within amino-acid biosynthesis; S-adenosyl-L-methionine biosynthesis. Catalyzes the hydrolysis of S-inosyl-L-homocysteine (SIH) to L-homocysteine (Hcy) and inosine. Likely functions in a S-adenosyl-L-methionine (SAM) recycling pathway from S-adenosyl-L-homocysteine (SAH) produced from SAM-dependent methylation reactions. Can also catalyze the reverse reaction in vitro, i.e. the synthesis of SIH from Hcy and inosine. Is specific for SIH and inosine as it is unable to either hydrolyze SAH or synthesize SAH from adenosine and Hcy. This Methanocaldococcus jannaschii (strain ATCC 43067 / DSM 2661 / JAL-1 / JCM 10045 / NBRC 100440) (Methanococcus jannaschii) protein is S-inosyl-L-homocysteine hydrolase.